Consider the following 291-residue polypeptide: UTP--glucose-1-phosphate uridylyltransferase (291 aa).

It belongs to the UDPGP type 2 family.

It carries out the reaction alpha-D-glucose 1-phosphate + UTP + H(+) = UDP-alpha-D-glucose + diphosphate. In terms of biological role, may play a role in stationary phase survival. The chain is UTP--glucose-1-phosphate uridylyltransferase (galU) from Mycoplasma pneumoniae (strain ATCC 29342 / M129 / Subtype 1) (Mycoplasmoides pneumoniae).